The sequence spans 455 residues: Glycylpeptide N-tetradecanoyltransferase (455 aa).

Tetradecanoyl-CoA is bound at residue 38 to 41 (HKFW). The segment at 168–204 (INFLCVHKQLRSKRLTPVLIKEITRRVNKCDIWHALY) is myristoyl CoA-binding. The active-site Proton acceptor; via carboxylate is the Leu-455.

This sequence belongs to the NMT family. Monomer. The N-terminus is blocked.

It is found in the cytoplasm. It carries out the reaction N-terminal glycyl-[protein] + tetradecanoyl-CoA = N-tetradecanoylglycyl-[protein] + CoA + H(+). Inhibited by diethylpyrocarbonate. Competitively inhibited by S-(2-oxo)pentadecyl-CoA, a non hydrolysable myristoyl-CoA analog, and by SC-58272, a peptidomimetic derived from the N-terminal sequence of a natural substrate. Functionally, adds a myristoyl group to the N-terminal glycine residue of certain cellular proteins. Substrate specificity requires an N-terminal glycine in the nascent polypeptide substrates. Uncharged amino acids are preferred at position 2 while neutral residues are favored at positions 3 and 4. Ser is present at position 5 in almost all known N-myristoyl proteins and Lys is commonly encountered at postion 6. In Saccharomyces cerevisiae (strain ATCC 204508 / S288c) (Baker's yeast), this protein is Glycylpeptide N-tetradecanoyltransferase (NMT1).